The primary structure comprises 387 residues: MTVLKMTDLDLQGKRVLIREDLNVPVKDGVVTSDARILAALPTIKLALEKGAAVMVCSHLGRPTEGEFSEENSLKPVAAYLSKALGREVPLVADYLDGVEVKAGDLVLFENVRFNKGEKKNADELAQKYAALCDVFVMDAFGTAHRAEGSTHGVAKFAKVATAGPLLAAELDALGKALKAPAKPMAAIVAGSKVSTKLDVLNSLSTVCDQLIVGGGIANTFLAAAGHPVGKSLYEPDLVETAKAIAAKVSVPLPVDVVVAKAFAEDAEATVKAIADVAADDMILDIGPKTAEQFAELLKTSKTILWNGPVGVFEFDQFGNGTKVLAKAIADSAAFSIAGGGDTLAAIDKYGVGADISYISTGGGAFLEFVEGKVLPAVAILEERAKA.

Substrate is bound by residues 21-23 (DLN), Arg-36, 59-62 (HLGR), Arg-113, and Arg-146. Residues Lys-197, Glu-314, and 340 to 343 (GGDT) contribute to the ATP site.

It belongs to the phosphoglycerate kinase family. Monomer.

It localises to the cytoplasm. It carries out the reaction (2R)-3-phosphoglycerate + ATP = (2R)-3-phospho-glyceroyl phosphate + ADP. It participates in carbohydrate degradation; glycolysis; pyruvate from D-glyceraldehyde 3-phosphate: step 2/5. The protein is Phosphoglycerate kinase of Pseudomonas entomophila (strain L48).